The chain runs to 184 residues: C-phycoerythrin beta chain (184 aa).

2 residues coordinate (2R,3E)-phycoerythrobilin: Cys48 and Cys59. The residue at position 70 (Asn70) is an N4-methylasparagine. Cys80 and Cys165 together coordinate (2R,3E)-phycoerythrobilin.

Belongs to the phycobiliprotein family. Heterodimer of an alpha and a beta chain. Post-translationally, contains three covalently linked bilin chromophores.

The protein resides in the cellular thylakoid membrane. Its function is as follows. Light-harvesting photosynthetic bile pigment-protein from the phycobiliprotein complex. The polypeptide is C-phycoerythrin beta chain (cpeB) (Microchaete diplosiphon (Fremyella diplosiphon)).